A 425-amino-acid chain; its full sequence is Histidine--tRNA ligase (425 aa).

Belongs to the class-II aminoacyl-tRNA synthetase family. In terms of assembly, homodimer.

Its subcellular location is the cytoplasm. The catalysed reaction is tRNA(His) + L-histidine + ATP = L-histidyl-tRNA(His) + AMP + diphosphate + H(+). The polypeptide is Histidine--tRNA ligase (Desulforapulum autotrophicum (strain ATCC 43914 / DSM 3382 / VKM B-1955 / HRM2) (Desulfobacterium autotrophicum)).